Reading from the N-terminus, the 254-residue chain is MAAYKLVLIRHGESAWNLENRFSGWYDADLSPAGHEEAKRGGQALRDAGYEFDICFTSVQKRAIRTLWTVLDAIDQMWLPVVRTWRLNERHYGGLTGLNKAETAAKHGEAQVKIWRRSYDVPPPPMEPDHPFYSNISKDRRYADLTEDQLPSCESLKDTIARALPFWNEEIVPQIKEGKRVLIAAHGNSLRGIVKHLEGLSEEAIMELNLPTGIPIVYELDKNSKPIKPMQFLGDEETVRKAMEAVAAQGKAKK.

Substrate-binding positions include 10-17 and 23-24; these read RHGESAWN and SG. H11 serves as the catalytic Tele-phosphohistidine intermediate. Phosphoserine occurs at positions 14 and 23. Position 26 is a phosphotyrosine (Y26). The residue at position 31 (S31) is a Phosphoserine. Residues R62, 89–92, and K100 each bind substrate; that span reads ERHY. Residue E89 is the Proton donor/acceptor of the active site. Position 106 is an N6-acetyllysine (K106). Position 116-117 (116-117) interacts with substrate; the sequence is RR. S118 carries the phosphoserine modification. 187–188 lines the substrate pocket; that stretch reads GN. An N6-acetyllysine; alternate modification is found at K251. K251 bears the N6-succinyllysine; alternate mark. An N6-acetyllysine mark is found at K253 and K254.

It belongs to the phosphoglycerate mutase family. BPG-dependent PGAM subfamily. Homodimer. Acetylated at Lys-253, Lys-253 and Lys-254 under high glucose condition. Acetylation increases catalytic activity. Under glucose restriction SIRT1 levels dramatically increase and it deacetylates the enzyme.

The enzyme catalyses (2R)-2-phosphoglycerate = (2R)-3-phosphoglycerate. It catalyses the reaction (2R)-3-phospho-glyceroyl phosphate = (2R)-2,3-bisphosphoglycerate + H(+). In terms of biological role, catalyzes the interconversion of 2-phosphoglycerate and 3-phosphoglyceratea crucial step in glycolysis, by using 2,3-bisphosphoglycerate. Also catalyzes the interconversion of (2R)-2,3-bisphosphoglycerate and (2R)-3-phospho-glyceroyl phosphate. This chain is Phosphoglycerate mutase 1, found in Pongo abelii (Sumatran orangutan).